The sequence spans 527 residues: Protein IQ-DOMAIN 4 (527 aa).

Positions 13 to 90 are disordered; that stretch reads CLSPGKDKKN…PPSPPPPPPA (78 aa). Residues 17–26 show a composition bias toward basic and acidic residues; it reads GKDKKNQKPE. Residues 63-90 are compositionally biased toward pro residues; it reads PYPPPPPLPDFAPQPLLPPPSPPPPPPA. An IQ domain is found at 147 to 175; that stretch reads EETAAIKIQNAYRCYTARRTLRALRGMAR. The segment at 256–273 is calmodulin-binding; it reads RSVNRKEASVRRERALAY. Residues 323–527 are disordered; it reads VSVKSSLKRE…EKKRRNGGSS (205 aa). The segment covering 335–360 has biased composition (polar residues); that stretch reads IKSSPARSKTQKSASQSSIQWPVNND. A compositionally biased stretch (basic and acidic residues) spans 361–370; sequence TKSRKIEVTN. Polar residues-rich tracts occupy residues 399–422 and 437–455; these read LDNT…NAQT and NTKT…NLAN. Residues 471-481 are compositionally biased toward basic and acidic residues; that stretch reads PKKEVVADKKK. Positions 478 to 485 match the Nuclear localization signal motif; the sequence is DKKKPPQM.

The protein belongs to the IQD family. As to quaternary structure, binds to multiple calmodulin (CaM) in the presence of Ca(2+) and CaM-like proteins.

The protein localises to the nucleus. The protein resides in the nucleolus. Functionally, may be involved in cooperative interactions with calmodulins or calmodulin-like proteins. Recruits calmodulin proteins to microtubules, thus being a potential scaffold in cellular signaling and trafficking. May associate with nucleic acids and regulate gene expression at the transcriptional or post-transcriptional level. This is Protein IQ-DOMAIN 4 from Arabidopsis thaliana (Mouse-ear cress).